The primary structure comprises 382 residues: Anhydro-N-acetylmuramic acid kinase (382 aa).

9–16 lines the ATP pocket; the sequence is GTSLDGID.

It belongs to the anhydro-N-acetylmuramic acid kinase family.

The catalysed reaction is 1,6-anhydro-N-acetyl-beta-muramate + ATP + H2O = N-acetyl-D-muramate 6-phosphate + ADP + H(+). Its pathway is amino-sugar metabolism; 1,6-anhydro-N-acetylmuramate degradation. It participates in cell wall biogenesis; peptidoglycan recycling. Catalyzes the specific phosphorylation of 1,6-anhydro-N-acetylmuramic acid (anhMurNAc) with the simultaneous cleavage of the 1,6-anhydro ring, generating MurNAc-6-P. Is required for the utilization of anhMurNAc either imported from the medium or derived from its own cell wall murein, and thus plays a role in cell wall recycling. The protein is Anhydro-N-acetylmuramic acid kinase of Bacillus cereus (strain AH820).